A 408-amino-acid chain; its full sequence is LL-diaminopimelate aminotransferase (408 aa).

Substrate-binding residues include Tyr15 and Gly42. Residues Tyr72, 108-109 (SK), Tyr132, Asn187, Tyr218, and 246-248 (SFS) contribute to the pyridoxal 5'-phosphate site. The substrate site is built by Lys109, Tyr132, and Asn187. An N6-(pyridoxal phosphate)lysine modification is found at Lys249. Pyridoxal 5'-phosphate contacts are provided by Arg257 and Asn292. The substrate site is built by Asn292 and Arg388.

Belongs to the class-I pyridoxal-phosphate-dependent aminotransferase family. LL-diaminopimelate aminotransferase subfamily. As to quaternary structure, homodimer. It depends on pyridoxal 5'-phosphate as a cofactor.

It catalyses the reaction (2S,6S)-2,6-diaminopimelate + 2-oxoglutarate = (S)-2,3,4,5-tetrahydrodipicolinate + L-glutamate + H2O + H(+). The protein operates within amino-acid biosynthesis; L-lysine biosynthesis via DAP pathway; LL-2,6-diaminopimelate from (S)-tetrahydrodipicolinate (aminotransferase route): step 1/1. Involved in the synthesis of meso-diaminopimelate (m-DAP or DL-DAP), required for both lysine and peptidoglycan biosynthesis. Catalyzes the direct conversion of tetrahydrodipicolinate to LL-diaminopimelate. In Synechococcus sp. (strain RCC307), this protein is LL-diaminopimelate aminotransferase.